A 166-amino-acid polypeptide reads, in one-letter code: Interferon gamma (166 aa).

The N-terminal stretch at 1–23 (MKYTSSFLALLLSVLLGFSGSYG) is a signal peptide. Gln24 carries the post-translational modification Pyrrolidone carboxylic acid. 2 N-linked (GlcNAc...) asparagine glycosylation sites follow: Asn39 and Asn106.

Belongs to the type II (or gamma) interferon family. As to quaternary structure, homodimer. Interacts with IFNGR1 (via extracellular domain); this interaction promotes IFNGR1 dimerization. As to expression, released primarily from activated T lymphocytes.

The protein resides in the secreted. Its function is as follows. Type II interferon produced by immune cells such as T-cells and NK cells that plays crucial roles in antimicrobial, antiviral, and antitumor responses by activating effector immune cells and enhancing antigen presentation. Primarily signals through the JAK-STAT pathway after interaction with its receptor IFNGR1 to affect gene regulation. Upon IFNG binding, IFNGR1 intracellular domain opens out to allow association of downstream signaling components JAK2, JAK1 and STAT1, leading to STAT1 activation, nuclear translocation and transcription of IFNG-regulated genes. Many of the induced genes are transcription factors such as IRF1 that are able to further drive regulation of a next wave of transcription. Plays a role in class I antigen presentation pathway by inducing a replacement of catalytic proteasome subunits with immunoproteasome subunits. In turn, increases the quantity, quality, and repertoire of peptides for class I MHC loading. Increases the efficiency of peptide generation also by inducing the expression of activator PA28 that associates with the proteasome and alters its proteolytic cleavage preference. Up-regulates as well MHC II complexes on the cell surface by promoting expression of several key molecules such as cathepsins B/CTSB, H/CTSH, and L/CTSL. Participates in the regulation of hematopoietic stem cells during development and under homeostatic conditions by affecting their development, quiescence, and differentiation. This Capra hircus (Goat) protein is Interferon gamma (IFNG).